The sequence spans 120 residues: Putative iron-sulfur cluster insertion protein ErpA (120 aa).

3 residues coordinate iron-sulfur cluster: Cys49, Cys113, and Cys115.

Belongs to the HesB/IscA family. In terms of assembly, homodimer. It depends on iron-sulfur cluster as a cofactor.

Required for insertion of 4Fe-4S clusters. This is Putative iron-sulfur cluster insertion protein ErpA from Albidiferax ferrireducens (strain ATCC BAA-621 / DSM 15236 / T118) (Rhodoferax ferrireducens).